We begin with the raw amino-acid sequence, 755 residues long: Tryptophan 2-monooxygenase (755 aa).

4 residues coordinate FMN: serine 247, glutamate 267, lysine 275, and arginine 295. Arginine 295 is a substrate binding site.

It belongs to the tryptophan 2-monooxygenase family. The cofactor is FMN.

The catalysed reaction is L-tryptophan + O2 = indole-3-acetamide + CO2 + H2O. Its pathway is plant hormone metabolism; auxin biosynthesis. The polypeptide is Tryptophan 2-monooxygenase (tms1) (Agrobacterium tumefaciens (strain Ach5)).